The following is a 401-amino-acid chain: 8-amino-7-oxononanoate synthase (401 aa).

Arg-24 provides a ligand contact to substrate. 111–112 (GF) is a binding site for pyridoxal 5'-phosphate. Position 137 (His-137) interacts with substrate. 3 residues coordinate pyridoxal 5'-phosphate: Ser-183, His-211, and Thr-240. N6-(pyridoxal phosphate)lysine is present on Lys-243. Thr-357 serves as a coordination point for substrate.

Belongs to the class-II pyridoxal-phosphate-dependent aminotransferase family. BioF subfamily. In terms of assembly, homodimer. It depends on pyridoxal 5'-phosphate as a cofactor.

The enzyme catalyses 6-carboxyhexanoyl-[ACP] + L-alanine + H(+) = (8S)-8-amino-7-oxononanoate + holo-[ACP] + CO2. It participates in cofactor biosynthesis; biotin biosynthesis. In terms of biological role, catalyzes the decarboxylative condensation of pimeloyl-[acyl-carrier protein] and L-alanine to produce 8-amino-7-oxononanoate (AON), [acyl-carrier protein], and carbon dioxide. This Xylella fastidiosa (strain 9a5c) protein is 8-amino-7-oxononanoate synthase.